A 741-amino-acid chain; its full sequence is MAPSFDTLSEQDLHEEEEEEIDVSDLKAQYEVKLEEGLDTFVVIDGLPVVPEESRQKLVKFLMRKLNTVGHTSEDAVFMPVNDKNMSEGYAFVEYETPEQAVAAVKQLHGTPLDKKHTLLVNKLMDIERYGREGRIDEEYKPPTIEPFKEKEHLRSWLSDPNARDQFALYRGDKVGVFWNNKNNPPENVVDRAHWTQLFVQWSPKGTFLASVHPQGVQLWGGPAFSKQKQFPHPFVQLIEFSPGESYLTTWSARPIQVEEGQPILSYEEDGKNIIVWDIETGKPLRSFVSHDLSAPGGESDAQPKKKVQWPAFKWSADEKYVARMLQGQSISIYELPRMNLLGKTSVKVDGVMDFEWSPATVNREGVKQYEQLLCFWTPEIGSNPARVAMMSVPSKEIVRTRNLFNVSDVKLHWQSQGSFVCVKVDRHSKSKKSMATNLEIFRVREKGVPVEVVDSLKDTVINFAWEPNGSRFVLITNGETVAGAAVAPKTAVSFFAREKKGGAAGNFKLVRTIEKKNSNAIYWSPKGRFVVVATVHSQTSFDMDFWDMDFEGEKPEAEKDLTANVQLMKTLEHYGVTDIDWDPTGRYVVSSASAWTHSLENGWNMHTFSGNTLSENPTEKFKQFLWRPRPPTFLSKEEQKQVRKNLREYSKEFDEEDRYAVDIANTAVVEKRKRVLSEWIAWIRREKELLSEDKDAYGLPEDVDDPKKAKDAPAVTSEQGEAVVEEIVEEIVEESEEVIG.

Over residues 1 to 10 (MAPSFDTLSE) the composition is skewed to polar residues. Residues 1-22 (MAPSFDTLSEQDLHEEEEEEID) are disordered. Over residues 13–22 (LHEEEEEEID) the composition is skewed to acidic residues. The 87-residue stretch at 40 to 126 (TFVVIDGLPV…HTLLVNKLMD (87 aa)) folds into the RRM domain. WD repeat units lie at residues 193–230 (AHWTQLFVQWSPKGTFLASVHPQGVQLWGGPAFSKQKQ), 232–289 (PHPF…RSFV), 303–344 (QPKK…LLGK), 514–557 (IEKK…EKPE), and 572–610 (LEHYGVTDIDWDPTGRYVVSSASAWTHSLENGWNMHTFS). Residues 695–722 (KDAYGLPEDVDDPKKAKDAPAVTSEQGE) form a disordered region.

It belongs to the eIF-3 subunit B family. Component of the eukaryotic translation initiation factor 3 (eIF-3) complex.

Its subcellular location is the cytoplasm. RNA-binding component of the eukaryotic translation initiation factor 3 (eIF-3) complex, which is involved in protein synthesis of a specialized repertoire of mRNAs and, together with other initiation factors, stimulates binding of mRNA and methionyl-tRNAi to the 40S ribosome. The eIF-3 complex specifically targets and initiates translation of a subset of mRNAs involved in cell proliferation. The chain is Eukaryotic translation initiation factor 3 subunit B (prt1) from Aspergillus clavatus (strain ATCC 1007 / CBS 513.65 / DSM 816 / NCTC 3887 / NRRL 1 / QM 1276 / 107).